A 3016-amino-acid chain; its full sequence is Genome polyprotein (3016 aa).

Residue Ser2 is modified to N-acetylserine; by host. Positions 2-23 are interaction with STAT1; sequence STLPKPQRKTKRNTNRRPMDVK. An interaction with EIF2AK2/PKR region spans residues 2–58; the sequence is STLPKPQRKTKRNTNRRPMDVKFPGGGQIVGGVYLLPRRGPRLGVRATRKTSERSQP. The interaction with DDX3X stretch occupies residues 2 to 59; it reads STLPKPQRKTKRNTNRRPMDVKFPGGGQIVGGVYLLPRRGPRLGVRATRKTSERSQPR. The tract at residues 2 to 75 is disordered; it reads STLPKPQRKT…PKARQSQGRH (74 aa). Over 2 to 168 the chain is Cytoplasmic; it reads STLPKPQRKT…EDGINYATGN (167 aa). 2 consecutive short sequence motifs (nuclear localization signal) follow at residues 5 to 13 and 38 to 43; these read PKPQRKTKR and PRRGPR. A compositionally biased stretch (basic residues) spans 7 to 16; the sequence is PQRKTKRNTN. The span at 32-47 shows a compositional bias: low complexity; the sequence is GGVYLLPRRGPRLGVR. Phosphoserine; by host is present on Ser53. 2 consecutive short sequence motifs (nuclear localization signal) follow at residues 58 to 64 and 66 to 71; these read PRGRRQP and PKARQS. Residues Ser99 and Ser116 each carry the phosphoserine; by host modification. The segment at 112–152 is important for endoplasmic reticulum and mitochondrial localization; that stretch reads PRRRSRNLGKVIDTLTCGFADLMGYIPVVGAPLGGVAAALA. The segment at 122–173 is interaction with APOA2; the sequence is VIDTLTCGFADLMGYIPVVGAPLGGVAAALAHGVRAIEDGINYATGNLPGCS. The segment at 164-167 is important for lipid droplets localization; sequence YATG. Residues 169 to 189 form a helical membrane-spanning segment; that stretch reads LPGCSFSIFLLALLSCLTTPA. Positions 178 to 191 are cleaved as a propeptide — ER anchor for the core protein, removed in mature form by host signal peptidase; the sequence is LLALLSCLTTPASA. Residues 190–358 are Lumenal-facing; that stretch reads SAVHYRNISG…LEGHWGVIGA (169 aa). 4 N-linked (GlcNAc...) asparagine; by host glycosylation sites follow: Asn196, Asn209, Asn234, and Asn250. The tract at residues 265–296 is important for fusion; that stretch reads LVGSAAACSALYIGDLCGGVFLVGQLFTFRPR. Asn305 carries N-linked (GlcNAc...) asparagine; by host glycosylation. Residues 359–379 form a helical membrane-spanning segment; that stretch reads LLYYSMVANWAKVFAVLLLFA. Residues 380–727 lie on the Lumenal side of the membrane; that stretch reads GVDATTHIGS…WEYIVLAFLV (348 aa). The HVR1 stretch occupies residues 385–411; sequence THIGSSASATTNRLTSFFSPGSKQNVQ. N-linked (GlcNAc...) (high mannose) asparagine; by host glycans are attached at residues Asn416, Asn422, and Asn429. 4 cysteine pairs are disulfide-bonded: Cys428–Cys552, Cys451–Cys458, Cys486–Cys494, and Cys503–Cys508. The N-linked (GlcNAc...) asparagine; by host glycan is linked to Asn447. An HVR2 region spans residues 474-478; it reads ANISG. Asn475 is a glycosylation site (N-linked (GlcNAc...) asparagine; by host). Residues 480 to 493 are CD81-binding 1; it reads SNDKPYCWHYPPRP. The N-linked (GlcNAc...) asparagine; by host glycan is linked to Asn532. Positions 544–551 are CD81-binding 2; that stretch reads PPRGSWFG. Asn556 carries an N-linked (GlcNAc...) asparagine; by host glycan. 4 cysteine pairs are disulfide-bonded: Cys564-Cys569, Cys583-Cys587, Cys599-Cys622, and Cys609-Cys646. 2 N-linked (GlcNAc...) (high mannose) asparagine; by host glycosylation sites follow: Asn625 and Asn647. Cys654 and Cys679 are oxidised to a cystine. The interval 662–673 is PKR/eIF2-alpha phosphorylation homology domain (PePHD); that stretch reads VEMSPLLFSTTQ. Residues 728 to 748 form a helical membrane-spanning segment; it reads LAVARVCACLWLMFLVGQAEA. The Lumenal segment spans residues 749–759; sequence ALENLIVLNAT. The helical transmembrane segment at 760 to 780 threads the bilayer; sequence SAAGSQGWVWGVVFICAAWYI. Residues 781-784 are Cytoplasmic-facing; sequence RGRA. The helical transmembrane segment at 785–805 threads the bilayer; that stretch reads APITTYAILQLWPLLLLVLAL. Residues 806–815 lie on the Lumenal side of the membrane; that stretch reads PRRAYAYNGE. The chain crosses the membrane as a helical span at residues 816–836; it reads EAASLGMLAIVIITIFTLTPA. The Cytoplasmic portion of the chain corresponds to 837-883; it reads YKTLLISTLWWIQYYIARAEAMLYVWVPSLQVRGGRDAVILLTCLLH. The helical transmembrane segment at 884–904 threads the bilayer; that stretch reads PQLGFEVTKAILALLGPLYIL. Topologically, residues 905–930 are lumenal; it reads QYSLLKTPYFVRAHILLRVCMFLRGV. Residues 905-1028 form the Peptidase C18 domain; it reads QYSLLKTPYF…DIRDGGWRLL (124 aa). Residues 906 to 1208 form a protease NS2-3 region; sequence YSLLKTPYFV…PVENMQSTAR (303 aa). A lipid anchor (S-palmitoyl cysteine; by host) is attached at Cys924. A helical transmembrane segment spans residues 931-951; sequence AGGKYVQAALLRLGAWTGTYI. The interval 931–951 is interaction with host SCPS1; that stretch reads AGGKYVQAALLRLGAWTGTYI. Residues 952–1659 lie on the Cytoplasmic side of the membrane; it reads YDHLTPLSDW…CMSADLEVIT (708 aa). Active-site for protease NS2 activity; shared with dimeric partner residues include His954, Glu974, and Cys995. One can recognise a Peptidase S29 domain in the interval 1029–1210; that stretch reads APITAYAQQT…ENMQSTARSP (182 aa). Active-site charge relay system; for serine protease NS3 activity residues include His1085 and Asp1109. Residues Cys1125 and Cys1127 each contribute to the Zn(2+) site. The active-site Charge relay system; for serine protease NS3 activity is the Ser1167. Zn(2+)-binding residues include Cys1173 and His1177. Residues 1219–1371 form the Helicase ATP-binding domain; the sequence is PAVPQTYQVG…PNITEVALSS (153 aa). 1232 to 1239 provides a ligand contact to ATP; that stretch reads APTGSGKS. Ser1239 and Glu1319 together coordinate Mg(2+). Positions 1318–1321 match the DECH box motif; that stretch reads DECH. The tract at residues 1488 to 1500 is RNA-binding; sequence QRRGRTGRGKHGV. Residues 1660-1680 traverse the membrane as a helical segment; sequence STWVLVGGVLAALAAYCLSVG. Residues 1681–1692 form an NS3-binding region; the sequence is CVVVCGRISTTG. At 1681 to 1807 the chain is on the cytoplasmic side; sequence CVVVCGRIST…SLTSPLSTST (127 aa). Residues 1808 to 1828 traverse the membrane as a helical segment; it reads TLLLNILGGWVASQLANPTAS. Over 1829–1830 the chain is Lumenal; that stretch reads TA. The helical transmembrane segment at 1831–1851 threads the bilayer; it reads FVVSGLAGATVGSIGLGRVLV. A topological domain (cytoplasmic) is located at residue Asp1852. A helical membrane pass occupies residues 1853–1873; it reads IIAGYGAGVSGALVAFKIMSG. Over 1874–1883 the chain is Lumenal; the sequence is ETPSAEDMVN. A helical membrane pass occupies residues 1884 to 1904; that stretch reads LLPALLSPGALVVGVVCAAIL. The Cytoplasmic segment spans residues 1905 to 1974; the sequence is RRHAGPAEGA…WINSDWSTPC (70 aa). Cys1974 carries the S-palmitoyl cysteine; by host lipid modification. The stretch at 1975 to 2004 is an intramembrane region; that stretch reads SGSWLRDIWDWVCTVLSDFKVWLKSKLVPA. The Cytoplasmic portion of the chain corresponds to 2005–2995; sequence LPGVPFLSCQ…YHSVSRARPR (991 aa). The Zn(2+) site is built by Cys2013, Cys2031, Cys2033, and Cys2054. Positions 2122-2210 are FKBP8-binding; it reads EFFTEVDGVR…ASSLASQLSA (89 aa). The tract at residues 2122-2335 is transcriptional activation; the sequence is EFFTEVDGVR…PVPPPRRKSV (214 aa). The segment at 2137 to 2141 is interaction with non-structural protein 4A; the sequence is PACKP. Residues 2191 to 2443 form an interaction with host SKP2 region; sequence RLARGSPPSC…ALVTPCAAEE (253 aa). Phosphoserine; by host is present on residues Ser2196, Ser2199, Ser2203, Ser2206, Ser2209, and Ser2212. The segment at 2212–2251 is ISDR; the sequence is SLKATCTTHCAHPDADLIEANLLWRQEVGGNITRVESENK. Residues 2212-2277 are interaction with EIF2AK2/PKR; the sequence is SLKATCTTHC…REPSVPAECH (66 aa). Positions 2251 to 2309 are NS4B-binding; it reads KVIVLDSFDPLVPEYDDREPSVPAECHRPNRPKFPPALPIWARPDYNPPLLETWKKPDY. The V3 stretch occupies residues 2302-2379; the sequence is ETWKKPDYAP…PTTSKSSDQA (78 aa). The SH3-binding signature appears at 2325-2328; that stretch reads PPVP. The short motif at 2330–2338 is the Nuclear localization signal element; sequence PRRKSVVHL. Lys2353 participates in a covalent cross-link: Glycyl lysine isopeptide (Lys-Gly) (interchain with G-Cter in ubiquitin). Residues 2353-2414 are disordered; sequence KSFPTQPAST…PDLSSGSWST (62 aa). The span at 2355 to 2376 shows a compositional bias: polar residues; sequence FPTQPASTPDSDSGHPTTSKSS. At Ser2454 the chain carries Phosphoserine; by host. Residues 2639–2757 enclose the RdRp catalytic domain; it reads PMGFSYDTRC…IAESAGVQED (119 aa). Positions 2645, 2743, and 2744 each coordinate Mg(2+). The chain crosses the membrane as a helical span at residues 2996-3016; sequence IFLLCLLLLSVGVGIFLLPAR.

It belongs to the hepacivirus polyprotein family. Homooligomer. Interacts with E1 (via C-terminus). Interacts with the non-structural protein 5A. Interacts (via N-terminus) with host STAT1 (via SH2 domain); this interaction results in decreased STAT1 phosphorylation and ubiquitin-mediated proteasome-dependent STAT1 degradation, leading to decreased IFN-stimulated gene transcription. Interacts with host STAT3; this interaction constitutively activates STAT3. Interacts with host LTBR receptor. Interacts with host TNFRSF1A receptor and possibly induces apoptosis. Interacts with host HNRPK. Interacts with host YWHAE. Interacts with host UBE3A/E6AP. Interacts with host DDX3X. Interacts with host APOA2. Interacts with host RXRA protein. Interacts with host SP110 isoform 3/Sp110b; this interaction sequesters the transcriptional corepressor SP110 away from the nucleus. Interacts with host CREB3 nuclear transcription protein; this interaction triggers cell transformation. Interacts with host ACY3. Interacts with host C1QR1. Interacts with host RBM24; this interaction, which enhances the interaction of the mature core protein with 5'-UTR, may inhibit viral translation and favor replication. Interacts with host EIF2AK2/PKR; this interaction induces the autophosphorylation of EIF2AK2. Part of the viral assembly initiation complex composed of NS2, E1, E2, NS3, NS4A, NS5A and the mature core protein. In terms of assembly, forms a heterodimer with envelope glycoprotein E2. Interacts with mature core protein. Interacts with protease NS2. The heterodimer E1/E2 interacts with host CLDN1; this interaction plays a role in viral entry into host cell. Interacts with host SPSB2 (via C-terminus). Part of the viral assembly initiation complex composed of NS2, E1, E2, NS3, NS4A, NS5A and the mature core protein. Interacts with host NEURL3; this interaction prevents E1 binding to glycoprotein E2. As to quaternary structure, forms a heterodimer with envelope glycoprotein E1. Interacts with host CD81 and SCARB1 receptors; these interactions play a role in viral entry into host cell. Interacts with host EIF2AK2/PKR; this interaction inhibits EIF2AK2 and probably allows the virus to evade the innate immune response. Interacts with host CD209/DC-SIGN and CLEC4M/DC-SIGNR. Interact with host SPCS1; this interaction is essential for viral particle assembly. Interacts with protease NS2. The heterodimer E1/E2 interacts with host CLDN1; this interaction plays a role in viral entry into host cell. Part of the viral assembly initiation complex composed of NS2, E1, E2, NS3, NS4A, NS5A and the mature core protein. Interacts with host SLC3A2/4F2hc; the interaction may facilitate viral entry into host cell. Interacts with human PLSCR1. Homohexamer. Homoheptamer. Interacts with protease NS2. In terms of assembly, homodimer. Interacts with host SPCS1; this interaction is essential for viral particle assembly. Interacts with envelope glycoprotein E1. Interacts with envelope glycoprotein E2. Interacts with viroporin p7. Interacts with serine protease/helicase NS3. Part of the replication complex composed of NS2, NS3, NS4A, NS4B, NS5A and the RNA-directed RNA polymerase embedded in an ER-derived membranous web. Part of the viral assembly initiation complex composed of NS2, E1, E2, NS3, NS4A, NS5A and the mature core protein. As to quaternary structure, interacts with protease NS2. Interacts with non-structural protein 4A; this interaction stabilizes the folding of NS3 serine protease. NS3-NS4A interaction is essential for NS3 activation and allows membrane anchorage of the latter. NS3/NS4A complex also prevents phosphorylation of host IRF3, thus preventing the establishment of dsRNA induced antiviral state. Interacts with host MAVS; this interaction leads to the cleavage and inhibition of host MAVS. Interacts with host TICAM1; this interaction leads to the cleavage and inhibition of host TICAM1. Interacts with host TANK-binding kinase/TBK1; this interaction results in the inhibition of the association between TBK1 and IRF3, which leads to the inhibition of IRF3 activation. Interacts with host RBM24. Part of the replication complex composed of NS2, NS3, NS4A, NS4B, NS5A and the RNA-directed RNA polymerase embedded in an ER-derived membranous web. Part of the viral assembly initiation complex composed of NS2, E1, E2, NS3, NS4A, NS5A and the mature core protein. Interacts with NS3 serine protease; this interaction stabilizes the folding of NS3 serine protease. NS3-NS4A interaction is essential for NS3 activation and allows membrane anchorage of the latter. Interacts with non-structural protein 5A (via N-terminus). Part of the replication complex composed of NS2, NS3, NS4A, NS4B, NS5A and the RNA-directed RNA polymerase embedded in an ER-derived membranous web. Part of the viral assembly initiation complex composed of NS2, E1, E2, NS3, NS4A, NS5A and the mature core protein. In terms of assembly, homomultimer. Interacts with non-structural protein NS5A. Interacts with host PLA2G4C; this interaction likely initiates the recruitment of replication complexes to lipid droplets. Interacts with host STING; this interaction disrupts the interaction between STING and TBK1 thereby suppressing the interferon signaling. Part of the replication complex composed of NS2, NS3, NS4A, NS4B, NS5A and the RNA-directed RNA polymerase embedded in an ER-derived membranous web. As to quaternary structure, monomer. Homodimer; dimerization is required for RNA-binding. Interacts with the mature core protein. Interacts (via N-terminus) with non-structural protein 4A. Interacts with non-structural protein 4B. Interacts (via region D2) with RNA-directed RNA polymerase. Part of the viral assembly initiation complex composed of NS2, E1, E2, NS3, NS4A, NS5A and the mature core protein. Part of the replication complex composed of NS2, NS3, NS4A, NS4B, NS5A and the RNA-directed RNA polymerase embedded in an ER-derived membranous web. Interacts with host GRB2. Interacts with host BIN1. Interacts with host PIK3R1. Interacts with host SRCAP. Interacts with host FKBP8. Interacts (via C-terminus) with host VAPB (via MSP domain). Interacts with host EIF2AK2/PKR; this interaction leads to disruption of EIF2AK2 dimerization by NS5A and probably allows the virus to evade the innate immune response. Interacts (via N-terminus) with host PACSIN2 (via N-terminus); this interaction attenuates protein kinase C alpha-mediated phosphorylation of PACSIN2 by disrupting the interaction between PACSIN2 and PRKCA. Interacts (via N-terminus) with host SRC kinase (via SH2 domain). Interacts with most Src-family kinases. Interacts with host IFI27 and SKP2; promotes the ubiquitin-mediated proteasomal degradation of NS5A. Interacts with host GPS2. Interacts with host TNFRSF21; this interaction allows the modulation by the virus of JNK, p38 MAPK, STAT3, and Akt signaling pathways in a DR6-dependent manner. Interacts (via N-terminus) with host CIDEB (via N-terminus); this interaction seems to regulate the association of HCV particles with APOE. Interacts with host CHKA/Choline Kinase-alpha; CHKA bridges host PI4KA and NS5A and potentiates NS5A-stimulated PI4KA activity, which then facilitates the targeting of the ternary complex to the ER for viral replication. Interacts with host SPSB2 (via C-terminus); this interaction targets NS5A for ubiquitination and degradation. Interacts with host RAB18; this interaction may promote the association of NS5A and other replicase components with lipid droplets. Interacts (via region D2) with host PPIA/CYPA; the interaction stimulates RNA-binding ability of NS5A and is dependent on the peptidyl-prolyl cis-trans isomerase activity of PPIA/CYPA. Interacts with host TRIM14; this interaction induces the degradation of NS5A. Homooligomer. Interacts with non-structural protein 5A. Interacts with host VAPB. Interacts with host PRK2/PKN2. Interacts with host HNRNPA1 and SEPT6; these interactions facilitate viral replication. Part of the replication complex composed of NS2, NS3, NS4A, NS4B, NS5A and the RNA-directed RNA polymerase. The cofactor is Zn(2+). Requires Mg(2+) as cofactor. Post-translationally, specific enzymatic cleavages in vivo yield mature proteins. The structural proteins, core, E1, E2 and p7 are produced by proteolytic processing by host signal peptidases. The core protein precursor is synthesized as a 23 kDa, which is retained in the ER membrane through the hydrophobic signal peptide. Cleavage by the signal peptidase releases the 21 kDa mature core protein. The cleavage of the core protein precursor occurs between aminoacids 176 and 188 but the exact cleavage site is not known. Some degraded forms of the core protein appear as well during the course of infection. The other proteins (p7, NS2, NS3, NS4A, NS4B, NS5A and NS5B) are cleaved by the viral proteases. Autoprocessing between NS2 and NS3 is mediated by the NS2 cysteine protease catalytic domain and regulated by the NS3 N-terminal domain. Phosphorylated by host PKC and PKA. In terms of processing, ubiquitinated; mediated by UBE3A and leading to core protein subsequent proteasomal degradation. Post-translationally, highly N-glycosylated. Palmitoylation is required for NS2/3 autoprocessing and E2 recruitment to membranes. In terms of processing, palmitoylated. This modification may play a role in its polymerization or in protein-protein interactions. Post-translationally, phosphorylated on serines in a basal form termed p56. p58 is a hyperphosphorylated form of p56. p56 and p58 coexist in the cell in roughly equivalent amounts. Hyperphosphorylation is dependent on the presence of NS4A. Host CSNK1A1/CKI-alpha or RPS6KB1 kinases may be responsible for NS5A phosphorylation. Tyrosine phosphorylation is essential for the interaction with host SRC. In terms of processing, ubiquitinated. Ubiquitination, most probably at Lys-2353, mediated by host IFI27 and SKP2 leads to proteasomal degradation, restricting viral infection. Ubiquitination by host TRIM22 leads to interruption of viral replication. Post-translationally, the N-terminus is phosphorylated by host PRK2/PKN2.

It localises to the host endoplasmic reticulum membrane. The protein resides in the host mitochondrion membrane. The protein localises to the virion. Its subcellular location is the host cytoplasm. It is found in the host nucleus. It localises to the host lipid droplet. The protein resides in the virion membrane. The protein localises to the host mitochondrion. Its subcellular location is the host cell membrane. It is found in the host perinuclear region. The enzyme catalyses Hydrolysis of four peptide bonds in the viral precursor polyprotein, commonly with Asp or Glu in the P6 position, Cys or Thr in P1 and Ser or Ala in P1'.. It catalyses the reaction a ribonucleoside 5'-triphosphate + H2O = a ribonucleoside 5'-diphosphate + phosphate + H(+). It carries out the reaction ATP + H2O = ADP + phosphate + H(+). The catalysed reaction is RNA(n) + a ribonucleoside 5'-triphosphate = RNA(n+1) + diphosphate. Its activity is regulated as follows. Inhibited by the antiviral drug hexamethylene amiloride. Inhibition by amantadine appears to be genotype-dependent. Also inhibited by long-alkyl-chain iminosugar derivatives. Activity is up-regulated by PRK2/PKN2-mediated phosphorylation. Functionally, packages viral RNA to form a viral nucleocapsid, and promotes virion budding. Participates in the viral particle production as a result of its interaction with the non-structural protein 5A. Binds RNA and may function as a RNA chaperone to induce the RNA structural rearrangements taking place during virus replication. Modulates viral translation initiation by interacting with viral IRES and 40S ribosomal subunit. Affects various cell signaling pathways, host immunity and lipid metabolism. Prevents the establishment of cellular antiviral state by blocking the interferon-alpha/beta (IFN-alpha/beta) and IFN-gamma signaling pathways and by blocking the formation of phosphorylated STAT1 and promoting ubiquitin-mediated proteasome-dependent degradation of STAT1. Activates STAT3 leading to cellular transformation. Regulates the activity of cellular genes, including c-myc and c-fos. May repress the promoter of p53, and sequester CREB3 and SP110 isoform 3/Sp110b in the cytoplasm. Represses cell cycle negative regulating factor CDKN1A, thereby interrupting an important check point of normal cell cycle regulation. Targets transcription factors involved in the regulation of inflammatory responses and in the immune response: suppresses TNF-induced NF-kappa-B activation, and activates AP-1. Binds to dendritic cells (DCs) via C1QR1, resulting in down-regulation of T-lymphocytes proliferation. Alters lipid metabolism by interacting with hepatocellular proteins involved in lipid accumulation and storage. Induces up-regulation of FAS promoter activity, and thereby contributes to the increased triglyceride accumulation in hepatocytes (steatosis). Forms a heterodimer with envelope glycoprotein E2, which mediates virus attachment to the host cell, virion internalization through clathrin-dependent endocytosis and fusion with host membrane. Fusion with the host cell is most likely mediated by both E1 and E2, through conformational rearrangements of the heterodimer required for fusion rather than a classical class II fusion mechanism. E1/E2 heterodimer binds host apolipoproteins such as APOB and ApoE thereby forming a lipo-viro-particle (LVP). APOE associated to the LVP allows the initial virus attachment to cell surface receptors such as the heparan sulfate proteoglycans (HSPGs), syndecan-1 (SDC1), syndecan-1 (SDC2), the low-density lipoprotein receptor (LDLR) and scavenger receptor class B type I (SCARB1). The cholesterol transfer activity of SCARB1 allows E2 exposure and binding of E2 to SCARB1 and the tetraspanin CD81. E1/E2 heterodimer binding on CD81 activates the epithelial growth factor receptor (EGFR) signaling pathway. Diffusion of the complex E1-E2-EGFR-SCARB1-CD81 to the cell lateral membrane allows further interaction with Claudin 1 (CLDN1) and occludin (OCLN) to finally trigger HCV entry. Its function is as follows. Forms a heterodimer with envelope glycoprotein E1, which mediates virus attachment to the host cell, virion internalization through clathrin-dependent endocytosis and fusion with host membrane. Fusion with the host cell is most likely mediated by both E1 and E2, through conformational rearrangements of the heterodimer required for fusion rather than a classical class II fusion mechanism. The interaction between envelope glycoprotein E2 and host apolipoprotein E/APOE allows the proper assembly, maturation and infectivity of the viral particles. This interaction is probably promoted via the up-regulation of cellular autophagy by the virus. E1/E2 heterodimer binds host apolipoproteins such as APOB and APOE thereby forming a lipo-viro-particle (LVP). APOE associated to the LVP allows the initial virus attachment to cell surface receptors such as the heparan sulfate proteoglycans (HSPGs), syndecan-1 (SDC1), syndecan-1 (SDC2), the low-density lipoprotein receptor (LDLR) and scavenger receptor class B type I (SCARB1). The cholesterol transfer activity of SCARB1 allows E2 exposure and binding of E2 to SCARB1 and the tetraspanin CD81. E1/E2 heterodimer binding on CD81 activates the epithelial growth factor receptor (EGFR) signaling pathway. Diffusion of the complex E1-E2-EGFR-SCARB1-CD81 to the cell lateral membrane allows further interaction with Claudin 1 (CLDN1) and occludin (OCLN) to finally trigger HCV entry. Inhibits host EIF2AK2/PKR activation, preventing the establishment of an antiviral state. Viral ligand for CD209/DC-SIGN and CLEC4M/DC-SIGNR, which are respectively found on dendritic cells (DCs), and on liver sinusoidal endothelial cells and macrophage-like cells of lymph node sinuses. These interactions allow the capture of circulating HCV particles by these cells and subsequent facilitated transmission to permissive cells such as hepatocytes and lymphocyte subpopulations. The interaction between E2 and host amino acid transporter complex formed by SLC3A2 and SLC7A5/LAT1 may facilitate viral entry into host cell. In terms of biological role, ion channel protein that acts as a viroporin and plays an essential role in the assembly, envelopment and secretion of viral particles. Regulates the host cell secretory pathway, which induces the intracellular retention of viral glycoproteins and favors assembly of viral particles. Creates a pore in acidic organelles and releases Ca(2+) and H(+) in the cytoplasm of infected cells, leading to a productive viral infection. High levels of cytoplasmic Ca(2+) may trigger membrane trafficking and transport of viral ER-associated proteins to viroplasms, sites of viral genome replication. This ionic imbalance induces the assembly of the inflammasome complex, which triggers the maturation of pro-IL-1beta into IL-1beta through the action of caspase-1. Targets also host mitochondria and induces mitochondrial depolarization. In addition of its role as a viroporin, acts as a lipid raft adhesion factor. Functionally, cysteine protease required for the proteolytic auto-cleavage between the non-structural proteins NS2 and NS3. The N-terminus of NS3 is required for the function of NS2 protease (active region NS2-3). Promotes the initiation of viral particle assembly by mediating the interaction between structural and non-structural proteins. Displays three enzymatic activities: serine protease with a chymotrypsin-like fold, NTPase and RNA helicase. NS3 serine protease, in association with NS4A, is responsible for the cleavages of NS3-NS4A, NS4A-NS4B, NS4B-NS5A and NS5A-NS5B. The NS3/NS4A complex prevents phosphorylation of host IRF3, thus preventing the establishment of dsRNA induced antiviral state. The NS3/NS4A complex induces host amino acid transporter component SLC3A2, thus contributing to HCV propagation. NS3 RNA helicase binds to RNA and unwinds both dsDNA and dsRNA in the 3' to 5' direction, and likely resolves RNA complicated stable secondary structures in the template strand. Binds a single ATP and catalyzes the unzipping of a single base pair of dsRNA. Inhibits host antiviral proteins TBK1 and IRF3 thereby preventing the establishment of an antiviral state. Cleaves host MAVS/CARDIF thereby preventing the establishment of an antiviral state. Cleaves host TICAM1/TRIF, thereby disrupting TLR3 signaling and preventing the establishment of an antiviral state. Its function is as follows. Peptide cofactor which forms a non-covalent complex with the N-terminal of NS3 serine protease. The NS3/NS4A complex prevents phosphorylation of host IRF3, thus preventing the establishment of dsRNA induced antiviral state. The NS3/NS4A complex induces host amino acid transporter component SLC3A2, thus contributing to HCV propagation. In terms of biological role, induces a specific membrane alteration that serves as a scaffold for the virus replication complex. This membrane alteration gives rise to the so-called ER-derived membranous web that contains the replication complex. NS4B self-interaction contributes to its function in membranous web formation. Promotes host TRIF protein degradation in a CASP8-dependent manner thereby inhibiting host TLR3-mediated interferon signaling. Disrupts the interaction between STING and TBK1 contributing to the inhibition of interferon signaling. Functionally, phosphorylated protein that is indispensable for viral replication and assembly. Both hypo- and hyperphosphorylated states are required for the viral life cycle. The hyperphosphorylated form of NS5A is an inhibitor of viral replication. Involved in RNA-binding and especially in binding to the viral genome. Zinc is essential for RNA-binding. Participates in the viral particle production as a result of its interaction with the mature viral core protein. Its interaction with host VAPB may target the viral replication complex to vesicles. Down-regulates viral IRES translation initiation. Mediates interferon resistance, presumably by interacting with and inhibiting host EIF2AK2/PKR. Prevents BIN1-induced apoptosis. Acts as a transcriptional activator of some host genes important for viral replication when localized in the nucleus. Via the interaction with host PACSIN2, modulates lipid droplet formation in order to promote virion assembly. Modulates TNFRSF21/DR6 signaling pathway for viral propagation. RNA-dependent RNA polymerase that performs primer-template recognition and RNA synthesis during viral replication. Initiates RNA transcription/replication at a flavin adenine dinucleotide (FAD), resulting in a 5'- FAD cap on viral RNAs. In this way, recognition of viral 5' RNA by host pattern recognition receptors can be bypassed, thereby evading activation of antiviral pathways. The chain is Genome polyprotein from Hepatitis C virus genotype 6k (isolate VN405) (HCV).